The sequence spans 69 residues: Cold shock protein CapB (69 aa).

The CSD domain occupies 7 to 66; that stretch reads GTVKWFNDEKGFGFITPQSGDDLFVHFKAIQSDGFKSLKEGQQVSFIATRGQKGMQAEEV.

The protein resides in the cytoplasm. Affects cell viability at low temperatures. The chain is Cold shock protein CapB (capB) from Pseudomonas fragi.